The sequence spans 580 residues: F-box only protein 24 (580 aa).

An F-box domain is found at 36–82; that stretch reads PISIQLFPPELVEHIISFLPVRDLVALGQTCRYFHEVCDAEGVWRRI. The RCC1 repeat unit spans residues 376–425; sequence GRIFMQGNNRYGQLGTGDKMDRGEPTQVRYLQRPITLWCGLNHSLVLSQS.

Directly interacts with SKP1 and CUL1.

In terms of biological role, substrate-recognition component of the SCF (SKP1-CUL1-F-box protein)-type E3 ubiquitin ligase complex. This Macaca fascicularis (Crab-eating macaque) protein is F-box only protein 24 (FBXO24).